The primary structure comprises 173 residues: Ribosome maturation factor RimM (173 aa).

In terms of domain architecture, PRC barrel spans 95–169 (EGSYYFKDIL…RIEVTLLEGL (75 aa)).

The protein belongs to the RimM family. As to quaternary structure, binds ribosomal protein uS19.

It is found in the cytoplasm. Its function is as follows. An accessory protein needed during the final step in the assembly of 30S ribosomal subunit, possibly for assembly of the head region. Essential for efficient processing of 16S rRNA. May be needed both before and after RbfA during the maturation of 16S rRNA. It has affinity for free ribosomal 30S subunits but not for 70S ribosomes. This chain is Ribosome maturation factor RimM, found in Lactobacillus gasseri (strain ATCC 33323 / DSM 20243 / BCRC 14619 / CIP 102991 / JCM 1131 / KCTC 3163 / NCIMB 11718 / NCTC 13722 / AM63).